The chain runs to 474 residues: Coronin-1C (474 aa).

WD repeat units follow at residues 25–70 (DDIR…GRID), 78–118 (GHTG…LTLS), 128–168 (GHSK…ALIN), 172–202 (MHSD…RVID), 215–249 (AHEG…ALWN), and 263–303 (DTSN…PYVH). The stretch at 436-474 (QNEAKLDEILKEIKSIKDTICNQDERISKLEQQMAKIAA) forms a coiled coil. Lysine 446 carries the N6-acetyllysine modification.

This sequence belongs to the WD repeat coronin family. Binds F-actin. Interacts with RCC2. Interacts preferentially with nucleotide-free and GDP-bound RAC1. Interacts with VIM (via head domain). Isoform 1 and isoform 2 appear as homotrimers, while isoform 3 seems to exist as monomers. Interacts with MICAL2; this interaction recruits MICAL2 to the actin filaments. In terms of tissue distribution, ubiquitous.

The protein resides in the cell membrane. Its subcellular location is the cell projection. The protein localises to the lamellipodium. It is found in the ruffle membrane. It localises to the cytoplasm. The protein resides in the cytoskeleton. Its subcellular location is the cell cortex. The protein localises to the endosome membrane. It is found in the sarcolemma. It localises to the myofibril. The protein resides in the sarcomere. Its subcellular location is the synapse. Functionally, plays a role in directed cell migration by regulating the activation and subcellular location of RAC1. Increases the presence of activated RAC1 at the leading edge of migrating cells. Required for normal organization of the cytoskeleton, including the actin cytoskeleton, microtubules and the vimentin intermediate filaments. Plays a role in endoplasmic reticulum-associated endosome fission: localizes to endosome membrane tubules and promotes recruitment of TMCC1, leading to recruitment of the endoplasmic reticulum to endosome tubules for fission. Endosome membrane fission of early and late endosomes is essential to separate regions destined for lysosomal degradation from carriers to be recycled to the plasma membrane. Required for normal cell proliferation, cell migration, and normal formation of lamellipodia. Required for normal distribution of mitochondria within cells. Its function is as follows. Involved in myogenic differentiation. The sequence is that of Coronin-1C from Homo sapiens (Human).